The primary structure comprises 194 residues: dITP/XTP pyrophosphatase (194 aa).

Residue 9–14 (THNPGK) coordinates substrate. Positions 40 and 69 each coordinate Mg(2+). The active-site Proton acceptor is the D69. Residues S70, 152–155 (FGYD), K175, and 180–181 (HR) contribute to the substrate site.

This sequence belongs to the HAM1 NTPase family. In terms of assembly, homodimer. It depends on Mg(2+) as a cofactor.

It catalyses the reaction XTP + H2O = XMP + diphosphate + H(+). It carries out the reaction dITP + H2O = dIMP + diphosphate + H(+). The catalysed reaction is ITP + H2O = IMP + diphosphate + H(+). In terms of biological role, pyrophosphatase that catalyzes the hydrolysis of nucleoside triphosphates to their monophosphate derivatives, with a high preference for the non-canonical purine nucleotides XTP (xanthosine triphosphate), dITP (deoxyinosine triphosphate) and ITP. Seems to function as a house-cleaning enzyme that removes non-canonical purine nucleotides from the nucleotide pool, thus preventing their incorporation into DNA/RNA and avoiding chromosomal lesions. The protein is dITP/XTP pyrophosphatase of Caulobacter vibrioides (strain ATCC 19089 / CIP 103742 / CB 15) (Caulobacter crescentus).